The primary structure comprises 173 residues: Photosystem I assembly protein Ycf3 (173 aa).

TPR repeat units lie at residues 35-68 (AFSYYRDGMSAQAEGEYAEALQNYYEAMRLEIDP), 72-105 (SYILYNIGLIHTSNGEHGKALEYYYQAIERNPSL), and 120-153 (GEQAIEEGNIATSEILFNQAASYWKQAIRLAPNS).

Belongs to the Ycf3 family.

The protein resides in the plastid. It localises to the chloroplast thylakoid membrane. Its function is as follows. Essential for the assembly of the photosystem I (PSI) complex. May act as a chaperone-like factor to guide the assembly of the PSI subunits. The sequence is that of Photosystem I assembly protein Ycf3 from Mesostigma viride (Green alga).